The primary structure comprises 180 residues: UPF0227 protein KPN78578_10770 (180 aa).

This sequence belongs to the UPF0227 family.

In Klebsiella pneumoniae subsp. pneumoniae (strain ATCC 700721 / MGH 78578), this protein is UPF0227 protein KPN78578_10770.